A 234-amino-acid chain; its full sequence is Carboxy-S-adenosyl-L-methionine synthase (234 aa).

Residues Tyr35, 60–62 (GCS), 109–110 (DI), Asn124, and Arg191 contribute to the S-adenosyl-L-methionine site.

This sequence belongs to the class I-like SAM-binding methyltransferase superfamily. Cx-SAM synthase family. Homodimer.

It catalyses the reaction prephenate + S-adenosyl-L-methionine = carboxy-S-adenosyl-L-methionine + 3-phenylpyruvate + H2O. Its function is as follows. Catalyzes the conversion of S-adenosyl-L-methionine (SAM) to carboxy-S-adenosyl-L-methionine (Cx-SAM). The sequence is that of Carboxy-S-adenosyl-L-methionine synthase from Campylobacter fetus subsp. fetus (strain 82-40).